Consider the following 77-residue polypeptide: Defensin-like protein 1 (77 aa).

The signal sequence occupies residues 1–30 (MKLSVRFISAALLLFMVFIATGMGPVTVEA). 4 disulfide bridges follow: Cys-33–Cys-77, Cys-44–Cys-64, Cys-50–Cys-71, and Cys-54–Cys-73.

It belongs to the DEFL family. As to expression, expressed in the whole plant except roots.

The protein localises to the secreted. In terms of biological role, confers broad-spectrum resistance to pathogens. This is Defensin-like protein 1 (PDF2.3) from Arabidopsis thaliana (Mouse-ear cress).